The chain runs to 296 residues: Cleavage and polyadenylation specificity factor subunit 4 (296 aa).

5 C3H1-type zinc fingers span residues 35–63 (KSIA…RHIR), 64–91 (GDRT…HEYD), 92–119 (MTKM…HIDP), 120–147 (QSKV…HLRR), and 149–171 (LCMD…HPHF). The CCHC-type 1 zinc-finger motif lies at 189 to 206 (PTCHYCGELGHKANSCKQ). The segment at 222–254 (HSGGHSGGYSGHSGHIEGADDMQSNHHSQPHGP) is disordered. The segment at 266-283 (ITCYKCGNKGHYANKCPK) adopts a CCHC-type 2 zinc-finger fold.

In terms of assembly, component of the cleavage and polyadenylation specificity factor (CPSF) complex, composed of at least Clp, Cpsf73, Cpsf100 and Cpsf160. As to expression, during oogenesis, expression is detected in the germarium, in nurse cells, in the oocyte, and in the somatically derived follicular epithelial cells (at protein level). At oogenesis stage 12, nurse cells degenerate and their content is transferred into the oocyte. In larvae, expressed in all organs and disks (at protein level). In the larval salivary gland, expression is initially confined to cells at the anterior end but later expands throughout the entire gland (at protein level).

The protein resides in the nucleus. Its function is as follows. Component of the cleavage and polyadenylation specificity factor (CPSF) complex that plays a key role in pre-mRNA 3'-end formation, recognizing the AAUAAA signal sequence and interacting with poly(A) polymerase and other factors to bring about cleavage and poly(A) addition. Has endonuclease activity. Binds RNA polymers with a preference for G- and/or C-rich clusters. Binds single-stranded DNA non-specifically. The chain is Cleavage and polyadenylation specificity factor subunit 4 (Clp) from Drosophila melanogaster (Fruit fly).